We begin with the raw amino-acid sequence, 330 residues long: Ketol-acid reductoisomerase (NADP(+)) (330 aa).

Positions 2–182 (ARMYYDADAN…GGTRAGILET (181 aa)) constitute a KARI N-terminal Rossmann domain. NADP(+) is bound by residues 25 to 28 (YGSQ), Ser51, Ser53, and 83 to 86 (DEFQ). Residue His108 is part of the active site. Gly134 contributes to the NADP(+) binding site. A KARI C-terminal knotted domain is found at 183–328 (SFREETETDL…KDLRAMFSWL (146 aa)). Mg(2+) contacts are provided by Asp191, Glu195, Glu227, and Glu231. Ser252 provides a ligand contact to substrate.

The protein belongs to the ketol-acid reductoisomerase family. The cofactor is Mg(2+).

It catalyses the reaction (2R)-2,3-dihydroxy-3-methylbutanoate + NADP(+) = (2S)-2-acetolactate + NADPH + H(+). It carries out the reaction (2R,3R)-2,3-dihydroxy-3-methylpentanoate + NADP(+) = (S)-2-ethyl-2-hydroxy-3-oxobutanoate + NADPH + H(+). It participates in amino-acid biosynthesis; L-isoleucine biosynthesis; L-isoleucine from 2-oxobutanoate: step 2/4. Its pathway is amino-acid biosynthesis; L-valine biosynthesis; L-valine from pyruvate: step 2/4. Functionally, involved in the biosynthesis of branched-chain amino acids (BCAA). Catalyzes an alkyl-migration followed by a ketol-acid reduction of (S)-2-acetolactate (S2AL) to yield (R)-2,3-dihydroxy-isovalerate. In the isomerase reaction, S2AL is rearranged via a Mg-dependent methyl migration to produce 3-hydroxy-3-methyl-2-ketobutyrate (HMKB). In the reductase reaction, this 2-ketoacid undergoes a metal-dependent reduction by NADPH to yield (R)-2,3-dihydroxy-isovalerate. This chain is Ketol-acid reductoisomerase (NADP(+)), found in Synechococcus sp. (strain ATCC 27144 / PCC 6301 / SAUG 1402/1) (Anacystis nidulans).